The primary structure comprises 310 residues: Tyrosine recombinase XerC (310 aa).

The 92-residue stretch at 1–92 (MDELIKEFDR…SLRAFFKYLH (92 aa)) folds into the Core-binding (CB) domain. Residues 113 to 300 (YIPAVLSVDE…SVNRLMAVYD (188 aa)) enclose the Tyr recombinase domain. Active-site residues include Arg153, Lys177, His252, Arg255, and His278. Residue Tyr287 is the O-(3'-phospho-DNA)-tyrosine intermediate of the active site.

This sequence belongs to the 'phage' integrase family. XerC subfamily. Forms a cyclic heterotetrameric complex composed of two molecules of XerC and two molecules of XerD.

It localises to the cytoplasm. Site-specific tyrosine recombinase, which acts by catalyzing the cutting and rejoining of the recombining DNA molecules. The XerC-XerD complex is essential to convert dimers of the bacterial chromosome into monomers to permit their segregation at cell division. It also contributes to the segregational stability of plasmids. This chain is Tyrosine recombinase XerC, found in Syntrophus aciditrophicus (strain SB).